Reading from the N-terminus, the 522-residue chain is WEB family protein At2g38370 (522 aa).

A disordered region spans residues 1–32 (MAEFPEPGTVNPDSDLSNGRAEKPEIDTSAPF). 2 coiled-coil regions span residues 77 to 264 (ELQR…AARE) and 299 to 376 (ARSA…RSEN). Disordered stretches follow at residues 374–397 (SENGQRRRLSSSVNNTSKFKSRRE) and 458–493 (MSLGQMLAKNSSSDKTVSKRSEGKENEKRTKTRKRK). Positions 473–486 (TVSKRSEGKENEKR) are enriched in basic and acidic residues.

Belongs to the WEB family.

This Arabidopsis thaliana (Mouse-ear cress) protein is WEB family protein At2g38370.